The primary structure comprises 319 residues: Ferrochelatase (319 aa).

Residues histidine 193 and glutamate 274 each contribute to the Fe cation site.

This sequence belongs to the ferrochelatase family.

The protein localises to the cytoplasm. The catalysed reaction is heme b + 2 H(+) = protoporphyrin IX + Fe(2+). Its pathway is porphyrin-containing compound metabolism; protoheme biosynthesis; protoheme from protoporphyrin-IX: step 1/1. In terms of biological role, catalyzes the ferrous insertion into protoporphyrin IX. In Actinobacillus pleuropneumoniae serotype 3 (strain JL03), this protein is Ferrochelatase.